We begin with the raw amino-acid sequence, 290 residues long: Undecaprenyl-diphosphatase (290 aa).

The next 8 helical transmembrane spans lie at 5–25, 44–64, 88–108, 122–142, 152–172, 195–215, 226–246, and 255–275; these read IGIFEAIVLGFVQGITEYFPI, GTAYSAVIQLGSLLAVLTYFY, VRLFWGIILGTIPIVIAGLAL, LSVIAVASIVMAALLWLSESL, IRVIDGILIGCAQALALVPGV, FSFLLAIPAIFLSGLLELKVL, PIVAGFVSSTVFSYLAIAWLL, and LVFVIYRFFFGALLLGLLAAG.

The protein belongs to the UppP family.

Its subcellular location is the cell inner membrane. It catalyses the reaction di-trans,octa-cis-undecaprenyl diphosphate + H2O = di-trans,octa-cis-undecaprenyl phosphate + phosphate + H(+). Catalyzes the dephosphorylation of undecaprenyl diphosphate (UPP). Confers resistance to bacitracin. This chain is Undecaprenyl-diphosphatase, found in Gloeobacter violaceus (strain ATCC 29082 / PCC 7421).